The sequence spans 154 residues: Ribosomal RNA-processing protein 14-N (154 aa).

Positions 36 to 154 (WKQKKSTLEE…KHKASPRAGF (119 aa)) are disordered. At serine 80 the chain carries Phosphoserine. Residue threonine 83 is modified to Phosphothreonine. The segment covering 105 to 133 (QDLREKRKAGDLNQKRQNKRPVENEKDSQ) has biased composition (basic and acidic residues). Positions 140-154 (KVQKKKHKASPRAGF) are enriched in basic residues.

This sequence belongs to the SURF6 family.

The protein localises to the nucleus. It localises to the nucleolus. Functionally, involved in ribosome biogenesis and cell polarity. Required for the synthesis of both 40S and 60S ribosomal subunits and may also play some direct role in correct positioning of the mitotic spindle during mitosis. The chain is Ribosomal RNA-processing protein 14-N (rrp14n) from Schizosaccharomyces pombe (strain 972 / ATCC 24843) (Fission yeast).